Here is a 492-residue protein sequence, read N- to C-terminus: Transmembrane protease serine 2 (492 aa).

The Cytoplasmic segment spans residues 1–84; that stretch reads MALNSGSPPA…TVCTSKTKKA (84 aa). Residues 85 to 105 form a helical; Signal-anchor for type II membrane protein membrane-spanning segment; the sequence is LCITLTLGTFLVGAALAAGLL. Residues 106 to 492 lie on the Extracellular side of the membrane; it reads WKFMGSKCSN…WIYRQMRADG (387 aa). 9 cysteine pairs are disulfide-bonded: cysteine 113-cysteine 126, cysteine 120-cysteine 139, cysteine 133-cysteine 148, cysteine 172-cysteine 231, cysteine 185-cysteine 241, cysteine 244-cysteine 365, cysteine 281-cysteine 297, cysteine 410-cysteine 426, and cysteine 437-cysteine 465. In terms of domain architecture, LDL-receptor class A spans 118–148; the sequence is IECDSSGTCINPSNWCDGVSHCPGGEDENRC. Ca(2+) is bound by residues asparagine 131, aspartate 134, valine 136, aspartate 144, and glutamate 145. The region spanning 149-242 is the SRCR domain; the sequence is VRLYGPNFIL…SKAVVSLRCI (94 aa). N-linked (GlcNAc...) asparagine glycosylation is found at asparagine 213 and asparagine 249. The region spanning 256–492 is the Peptidase S1 domain; that stretch reads IVGGESALPG…WIYRQMRADG (237 aa). Catalysis depends on charge relay system residues histidine 296 and aspartate 345. Residues 340–470 are HKU1-CoV S protein-binding; that stretch reads KTKNNDIALM…WGSGCAKAYR (131 aa). Serine 441 (charge relay system) is an active-site residue.

The protein belongs to the peptidase S1 family. As to quaternary structure, the catalytically active form interacts with ACE2. In terms of processing, proteolytically processed; by an autocatalytic mechanism. Autocleavage induces active conformation. In terms of tissue distribution, expressed in several tissues that comprise large populations of epithelial cells with the highest level of transcripts measured in the prostate gland. Expressed in type II pneumocytes in the lung (at protein level). Expressed strongly in small intestine. Also expressed in colon, stomach and salivary gland. Coexpressed with ACE2 within lung type II pneumocytes, ileal absorptive enterocytes, intestinal epithelial cells, cornea, gallbladder and nasal goblet secretory cells.

The protein resides in the cell membrane. It is found in the secreted. It carries out the reaction The enzyme cleaves angiotensin-converting enzyme 2 (EC 3.4.17.23) and cleaves influenzea A and B virus and coronavirus spike glycoproteins at arginine residues.. In terms of biological role, plasma membrane-anchored serine protease that cleaves at arginine residues. Participates in proteolytic cascades of relevance for the normal physiologic function of the prostate. Androgen-induced TMPRSS2 activates several substrates that include pro-hepatocyte growth factor/HGF, the protease activated receptor-2/F2RL1 or matriptase/ST14 leading to extracellular matrix disruption and metastasis of prostate cancer cells. In addition, activates trigeminal neurons and contribute to both spontaneous pain and mechanical allodynia. Functionally, (Microbial infection) Facilitates human coronaviruses SARS-CoV and SARS-CoV-2 infections via two independent mechanisms, proteolytic cleavage of ACE2 receptor which promotes viral uptake, and cleavage of coronavirus spike glycoproteins which activates the glycoprotein for host cell entry. The cleavage of SARS-COV2 spike glycoprotein occurs between the S2 and S2' site. Upon SARS-CoV-2 infection, increases syncytia formation by accelerating the fusion process. Proteolytically cleaves and activates the spike glycoproteins of human coronavirus 229E (HCoV-229E) and human coronavirus EMC (HCoV-EMC) and the fusion glycoproteins F0 of Sendai virus (SeV), human metapneumovirus (HMPV), human parainfluenza 1, 2, 3, 4a and 4b viruses (HPIV). Essential for spread and pathogenesis of influenza A virus (strains H1N1, H3N2 and H7N9); involved in proteolytic cleavage and activation of hemagglutinin (HA) protein which is essential for viral infectivity. Its function is as follows. (Microbial infection) Receptor for human coronavirus HKU1-CoV, acts synergistically with disialoside glycans to facilitate the entry of the virus. After binding to cell-surface disialoside glycans, the viral S protein interacts with the inactive form of TMPRSS2 and inhibits its protease activity. This chain is Transmembrane protease serine 2, found in Homo sapiens (Human).